A 103-amino-acid chain; its full sequence is Probable protease inhibitor Egf0.4b (103 aa).

Residues 1–22 form the signal peptide; the sequence is MMSEKFALVLLVACIAFIGIET. One can recognise a TIL domain in the interval 35 to 87; that stretch reads CGENEAYDSMRRGCEERCDDHNPTFCFKFTTVCWCEKGYVRDKSDTCIKVEDC.

Belongs to the polydnaviridae EGF-like motif protein family.

The polypeptide is Probable protease inhibitor Egf0.4b (O11) (Microplitis demolitor bracovirus (isolate Webb) (MdBV)).